The primary structure comprises 316 residues: Melanocyte-stimulating hormone receptor (316 aa).

At 1-37 (MPMQGAQRKLLGSLNSTPTATSNLGLAANHTGAPCLE) the chain is on the extracellular side. Residue Asn-29 is glycosylated (N-linked (GlcNAc...) asparagine). The chain crosses the membrane as a helical span at residues 38 to 63 (VSIPDGLFLSLGLVSLVENMLVVAAI). Residues 64-72 (AKNRNLHSP) are Cytoplasmic-facing. Residues 73 to 93 (MYCFICCLALSDLLVSGSNML) form a helical membrane-spanning segment. Residues 94-118 (ETAVVVLLEAGALATRASVVQQLHN) are Extracellular-facing. Residues 119-140 (TIDVLTYSSMLCSLCFVGAIAV) traverse the membrane as a helical segment. Topologically, residues 141–163 (DRYISIFYALRYHSIMTLPRVQR) are cytoplasmic. The chain crosses the membrane as a helical span at residues 164 to 183 (VIAAIWVASVTSSTLFITYY). Topologically, residues 184-191 (EHVVALLC) are extracellular. The helical transmembrane segment at 192 to 210 (LVVFLTMLVLMAVLYVHML) threads the bilayer. The Cytoplasmic portion of the chain corresponds to 211–239 (ARACQHAQGITRLHKRQPPAHQGFGLRGA). A helical transmembrane segment spans residues 240–265 (ATLTILLGIFFLCWGPFFLHLTLVVF). The Extracellular portion of the chain corresponds to 266 to 278 (CPQHLTCSCIFKN). The chain crosses the membrane as a helical span at residues 279–299 (FKVFLTLIICNTIIDPLIYAF). Over 300–316 (RSQELCRTLKEVLLCSW) the chain is Cytoplasmic. A lipid anchor (S-palmitoyl cysteine) is attached at Cys-314.

This sequence belongs to the G-protein coupled receptor 1 family. As to quaternary structure, interacts with MGRN1, but does not undergo MGRN1-mediated ubiquitination; this interaction competes with GNAS-binding and thus inhibits agonist-induced cAMP production. Interacts with OPN3; the interaction results in a decrease in MC1R-mediated cAMP signaling and ultimately a decrease in melanin production in melanocytes.

It localises to the cell membrane. Functionally, receptor for MSH (alpha, beta and gamma) and ACTH. The activity of this receptor is mediated by G proteins which activate adenylate cyclase. Mediates melanogenesis, the production of eumelanin (black/brown) and phaeomelanin (red/yellow), via regulation of cAMP signaling in melanocytes. In Cebus albifrons (White-fronted capuchin), this protein is Melanocyte-stimulating hormone receptor (MC1R).